The chain runs to 117 residues: Large ribosomal subunit protein uL18 (117 aa).

Belongs to the universal ribosomal protein uL18 family. As to quaternary structure, part of the 50S ribosomal subunit; part of the 5S rRNA/L5/L18/L25 subcomplex. Contacts the 5S and 23S rRNAs.

Its function is as follows. This is one of the proteins that bind and probably mediate the attachment of the 5S RNA into the large ribosomal subunit, where it forms part of the central protuberance. The chain is Large ribosomal subunit protein uL18 from Yersinia enterocolitica serotype O:8 / biotype 1B (strain NCTC 13174 / 8081).